Consider the following 407-residue polypeptide: Enolase-binding protein (407 aa).

An N-terminal signal peptide occupies residues 1-24 (MALGNALYPLTATVFLCVVGFATS). At 25-366 (SNENSRFLIN…FGQAYPGFRN (342 aa)) the chain is on the extracellular side. Asparagine 52, asparagine 78, asparagine 161, and asparagine 250 each carry an N-linked (GlcNAc...) asparagine glycan. Residues 367-387 (VAIGAAILFFSVLGVAIIDMI) traverse the membrane as a helical segment. Topologically, residues 388-407 (RRTIANRRAKRLHLGKYSRT) are cytoplasmic.

(Microbial infection) Interacts with ENO/enolase from parasites P.berghei and P.falciparum. Expressed in the female midgut epithelium.

The protein localises to the cell membrane. Functionally, (Microbial infection) Acts as a receptor for ENO/enolase from parasites P.berghei and P.falciparum. The interaction is involved in the invasion of the mosquito midgut by P.berghei ookinete, but is dispensable for P.falciparum ookinete invasion. In Anopheles gambiae (African malaria mosquito), this protein is Enolase-binding protein.